Reading from the N-terminus, the 362-residue chain is E3 ubiquitin-protein ligase rififylin (362 aa).

Residues 17 to 37 (ETPPPQGARTQAYSNPGYSSF) form a disordered region. Residues 24-37 (ARTQAYSNPGYSSF) are compositionally biased toward polar residues. The FYVE-type zinc finger occupies 41-93 (TGSEPSCKACGVHFASTTRKQTCLDCKKNFCMTCSSQEGNGPRLCLLCLRFRA). The SAP 1 domain occupies 101 to 120 (LMKMKVKDLRDYLSLHDIST). Positions 162 to 183 (LTQPQSSTVPPTSPGLPSSPAQ) are disordered. Residues Ser-225, Ser-228, Ser-231, and Ser-239 each carry the phosphoserine modification. Residues 249 to 263 (IEGLTVRQLKEILAR) enclose the SAP 2 domain. Residues 315 to 350 (CKICMDSPIDCVLLECGHMVTCTKCGKRMNECPICR) form an RING-type zinc finger.

As to quaternary structure, interacts with CASP8 and CASP10. Interacts with RIPK1 (via protein kinase domain); involved in RIPK1 ubiquitination. Interacts with PRR5L. Interacts (via RING-type zinc finger) with p53/TP53; involved in p53/TP53 ubiquitination. Interacts (via RING-type zinc finger) with MDM2; the interaction stabilizes MDM2. Autoubiquitinated. Post-translationally, palmitoylated. In terms of processing, undergoes caspase-mediated cleavage upon death-receptor activation, by TNFSF10 for instance. May be mediated by the caspases CASP8 and CASP10 in a negative feedback loop. In terms of tissue distribution, ubiquitous. Detected in cerebrum, cerebellum, midbrain, brain stem, hippocampus, striatum, liver, heart, lung, kidney, muscle, spleen and testis.

The protein localises to the cytoplasm. It localises to the cytosol. Its subcellular location is the cell membrane. It is found in the recycling endosome membrane. The enzyme catalyses S-ubiquitinyl-[E2 ubiquitin-conjugating enzyme]-L-cysteine + [acceptor protein]-L-lysine = [E2 ubiquitin-conjugating enzyme]-L-cysteine + N(6)-ubiquitinyl-[acceptor protein]-L-lysine.. The protein operates within protein modification; protein ubiquitination. E3 ubiquitin-protein ligase that regulates several biological processes through the ubiquitin-mediated proteasomal degradation of various target proteins. Mediates 'Lys-48'-linked polyubiquitination of PRR5L and its subsequent proteasomal degradation thereby indirectly regulating cell migration through the mTORC2 complex. Also ubiquitinates the caspases CASP8 and CASP10, promoting their proteasomal degradation, to negatively regulate apoptosis downstream of death domain receptors. Also negatively regulates the tumor necrosis factor-mediated signaling pathway through targeting of RIPK1 to ubiquitin-mediated proteasomal degradation. Negatively regulates p53/TP53 through its direct ubiquitination and targeting to proteasomal degradation. Indirectly, may also negatively regulate p53/TP53 through ubiquitination and degradation of SFN. May also play a role in endocytic recycling. This Rattus norvegicus (Rat) protein is E3 ubiquitin-protein ligase rififylin.